We begin with the raw amino-acid sequence, 715 residues long: Polyribonucleotide nucleotidyltransferase (715 aa).

Positions 493 and 499 each coordinate Mg(2+). The region spanning 560-619 is the KH domain; sequence PRMITIKINPEKIRDVIGKGGSVIRALTEETGTTIDISDDGVVTIASTNSDGMAEAKKRI. The S1 motif domain maps to 629 to 697; the sequence is GQVYEGTVLK…EKGRVRLSAK (69 aa).

The protein belongs to the polyribonucleotide nucleotidyltransferase family. Requires Mg(2+) as cofactor.

Its subcellular location is the cytoplasm. The enzyme catalyses RNA(n+1) + phosphate = RNA(n) + a ribonucleoside 5'-diphosphate. Functionally, involved in mRNA degradation. Catalyzes the phosphorolysis of single-stranded polyribonucleotides processively in the 3'- to 5'-direction. This is Polyribonucleotide nucleotidyltransferase from Burkholderia lata (strain ATCC 17760 / DSM 23089 / LMG 22485 / NCIMB 9086 / R18194 / 383).